A 186-amino-acid polypeptide reads, in one-letter code: Imidazoleglycerol-phosphate dehydratase (186 aa).

Belongs to the imidazoleglycerol-phosphate dehydratase family.

It is found in the cytoplasm. It carries out the reaction D-erythro-1-(imidazol-4-yl)glycerol 3-phosphate = 3-(imidazol-4-yl)-2-oxopropyl phosphate + H2O. It participates in amino-acid biosynthesis; L-histidine biosynthesis; L-histidine from 5-phospho-alpha-D-ribose 1-diphosphate: step 6/9. In Dictyoglomus thermophilum (strain ATCC 35947 / DSM 3960 / H-6-12), this protein is Imidazoleglycerol-phosphate dehydratase.